Consider the following 583-residue polypeptide: Peptidyl-prolyl cis-trans isomerase FKBP10 (583 aa).

The N-terminal stretch at 1–27 is a signal peptide; sequence MLRAGPPSHTLLRLPLLQLLLLLLVQA. PPIase FKBP-type domains follow at residues 63-151, 175-263, 287-375, and 400-487; these read GDFV…LDVW, SDFV…IDVH, GDFM…IDFH, and GDFV…VSRE. Residues N71, N183, and N295 are each glycosylated (N-linked (GlcNAc...) asparagine). 2 EF-hand domains span residues 498–533 and 543–578; these read WHEDPPAHLFEHMDLNKDGEVPVEEFSTFIKAQVSE and DPEKTIGDMFQNQDRNQDGKITAEELKLKSDEDQDR. Ca(2+) is bound by residues D511, N513, D515, E517, E522, D556, N558, D560, K562, and E567. Positions 534-583 are disordered; sequence GKGRLLPGQDPEKTIGDMFQNQDRNQDGKITAEELKLKSDEDQDRVHEEL. Residues 557-583 show a composition bias toward basic and acidic residues; it reads RNQDGKITAEELKLKSDEDQDRVHEEL. The Prevents secretion from ER signature appears at 580 to 583; it reads HEEL.

Glycosylated and phosphorylated.

It is found in the endoplasmic reticulum lumen. The catalysed reaction is [protein]-peptidylproline (omega=180) = [protein]-peptidylproline (omega=0). Its activity is regulated as follows. Inhibited by both FK506 and rapamycin, but not by cyclosporin A. Its function is as follows. PPIases accelerate the folding of proteins during protein synthesis. This chain is Peptidyl-prolyl cis-trans isomerase FKBP10 (FKBP10), found in Bos taurus (Bovine).